The sequence spans 882 residues: Alanine--tRNA ligase (882 aa).

4 residues coordinate Zn(2+): H570, H574, C672, and H676.

The protein belongs to the class-II aminoacyl-tRNA synthetase family. Zn(2+) serves as cofactor.

Its subcellular location is the cytoplasm. The enzyme catalyses tRNA(Ala) + L-alanine + ATP = L-alanyl-tRNA(Ala) + AMP + diphosphate. In terms of biological role, catalyzes the attachment of alanine to tRNA(Ala) in a two-step reaction: alanine is first activated by ATP to form Ala-AMP and then transferred to the acceptor end of tRNA(Ala). Also edits incorrectly charged Ser-tRNA(Ala) and Gly-tRNA(Ala) via its editing domain. In Xanthomonas euvesicatoria pv. vesicatoria (strain 85-10) (Xanthomonas campestris pv. vesicatoria), this protein is Alanine--tRNA ligase.